The primary structure comprises 229 residues: Interleukin-22 receptor subunit alpha-2 (229 aa).

Residues 1–19 form the signal peptide; that stretch reads MPKHCFLGLLIMLLTTATE. Fibronectin type-III domains are found at residues 28–127 and 128–229; these read KPQK…TKLD and PPVV…VQIP. An N-linked (GlcNAc...) asparagine glycan is attached at Asn54. 2 disulfides stabilise this stretch: Cys76-Cys84 and Cys204-Cys225.

The protein belongs to the type II cytokine receptor family.

It localises to the secreted. Functionally, receptor for IL22. Binds to IL22, prevents interaction with the functional IL-22R complex and blocks the activity of IL22 (in vitro). May play an important role as an IL22 antagonist in the regulation of inflammatory responses. In Rattus norvegicus (Rat), this protein is Interleukin-22 receptor subunit alpha-2 (Il22ra2).